Consider the following 744-residue polypeptide: Protein zyg-11 homolog B (744 aa).

LRR repeat units lie at residues 185-208 (LPRL…LACK), 216-236 (MHHL…VREL), and 237-261 (KHLN…LLEQ).

It belongs to the zyg-11 family. As to quaternary structure, interacts with ELOC/Elongin C. Part of an E3 ubiquitin ligase complex including ZYG11B, CUL2 and Elongin BC.

Functionally, serves as substrate adapter subunit in the E3 ubiquitin ligase complex ZYG11B-CUL2-Elongin BC. Acts redudantly with ZER1 to target substrates bearing N-terminal glycine degrons for proteasomal degradation. Involved in the clearance of proteolytic fragments generated by caspase cleavage during apoptosis since N-terminal glycine degrons are strongly enriched at caspase cleavage sites. Also important in the quality control of protein N-myristoylation in which N-terminal glycine degrons are conditionally exposed after a failure of N-myristoylation. This Mus musculus (Mouse) protein is Protein zyg-11 homolog B.